The following is a 354-amino-acid chain: Guanine nucleotide-binding protein G(o) subunit alpha (354 aa).

The N-myristoyl glycine moiety is linked to residue glycine 2. Residue cysteine 3 is the site of S-palmitoyl cysteine attachment. The region spanning 32 to 354 (KDIKLLLLGA…ANNLRGCGLY (323 aa)) is the G-alpha domain. Positions 35–48 (KLLLLGAGESGKST) are G1 motif. GTP is bound by residues 40–47 (GAGESGKS), 176–182 (LRTRVKT), 201–205 (DVGGQ), 270–273 (NKKD), and alanine 326. Mg(2+) contacts are provided by serine 47 and threonine 182. The tract at residues 174-182 (DILRTRVKT) is G2 motif. A G3 motif region spans residues 197–206 (FKLFDVGGQR). Residues 266 to 273 (ILFLNKKD) form a G4 motif region. Residues 324–329 (TCATDT) form a G5 motif region.

This sequence belongs to the G-alpha family. G(i/o/t/z) subfamily. As to quaternary structure, g proteins are composed of 3 units; alpha, beta and gamma. The alpha chain contains the guanine nucleotide binding site.

Guanine nucleotide-binding proteins (G proteins) are involved as modulators or transducers in various transmembrane signaling systems. The G(o) protein function is not clear. This is Guanine nucleotide-binding protein G(o) subunit alpha from Lymnaea stagnalis (Great pond snail).